A 478-amino-acid chain; its full sequence is Membrane-bound lytic murein transglycosylase F (478 aa).

Residues 1-22 form the signal peptide; that stretch reads MTRFLFAIILGFLLTACQQVTV. Positions 23–257 are non-LT domain; the sequence is EETEYVPHKL…HLNEKYFGHV (235 aa). Positions 258-478 are LT domain; the sequence is KRFDYIDTRA…PGTLSPDKPK (221 aa). Glu302 is an active-site residue. The disordered stretch occupies residues 446-478; that stretch reads SKQQNSDEEEPSDLASEDGPAPVPGTLSPDKPK. The segment covering 451–461 has biased composition (acidic residues); that stretch reads SDEEEPSDLAS.

It in the N-terminal section; belongs to the bacterial solute-binding protein 3 family. In the C-terminal section; belongs to the transglycosylase Slt family.

The protein resides in the cell outer membrane. The catalysed reaction is Exolytic cleavage of the (1-&gt;4)-beta-glycosidic linkage between N-acetylmuramic acid (MurNAc) and N-acetylglucosamine (GlcNAc) residues in peptidoglycan, from either the reducing or the non-reducing ends of the peptidoglycan chains, with concomitant formation of a 1,6-anhydrobond in the MurNAc residue.. Its function is as follows. Murein-degrading enzyme that degrades murein glycan strands and insoluble, high-molecular weight murein sacculi, with the concomitant formation of a 1,6-anhydromuramoyl product. Lytic transglycosylases (LTs) play an integral role in the metabolism of the peptidoglycan (PG) sacculus. Their lytic action creates space within the PG sacculus to allow for its expansion as well as for the insertion of various structures such as secretion systems and flagella. This Shewanella sp. (strain MR-4) protein is Membrane-bound lytic murein transglycosylase F.